A 486-amino-acid polypeptide reads, in one-letter code: Aromatic-L-amino-acid decarboxylase (486 aa).

Met1 is subject to N-acetylmethionine. Tandem repeats lie at residues 58-115 (QDVE…TELE) and 118-178 (MMDW…TQGA). The 2 X approximate tandem repeats stretch occupies residues 58-178 (QDVEKIIMPG…AASPGLTQGA (121 aa)). Thr82 contributes to the substrate binding site. Residues Ala148 and Ser149 each coordinate pyridoxal 5'-phosphate. Position 192 (His192) interacts with substrate. Pyridoxal 5'-phosphate is bound by residues Thr246 and Asn300. An N6-(pyridoxal phosphate)lysine modification is found at Lys303.

The protein belongs to the group II decarboxylase family. In terms of assembly, homodimer. Pyridoxal 5'-phosphate serves as cofactor.

It carries out the reaction L-dopa + H(+) = dopamine + CO2. It catalyses the reaction 5-hydroxy-L-tryptophan + H(+) = serotonin + CO2. The protein operates within catecholamine biosynthesis; dopamine biosynthesis; dopamine from L-tyrosine: step 2/2. In terms of biological role, catalyzes the decarboxylation of L-3,4-dihydroxyphenylalanine (DOPA) to dopamine and L-5-hydroxytryptophan to serotonin. The chain is Aromatic-L-amino-acid decarboxylase (DDC) from Sus scrofa (Pig).